Reading from the N-terminus, the 379-residue chain is MKAKTLTATLALILLAFAQADYDVASYCQLVQSGTKLPSLDSCQNYYTCVSNGLPTLSSCSSGYVFNKDSQQCVPTGSFNCFFGVANPCQNQDKKFVPSAKQCNEWHYCLAGAIAGTGTCKEGQIFNFAKQSCVYGECSNTGNNILDSPNLSVCQIMPNGIYFGDNKNCSTWHKCSGMEEKKGTCPNGDNFDPTYASCVPSNMPACSRIQNPPSTGVVSGPPSTSPCSLGTVVGDLTSCSVYYKCENATRSNSTIWNTYTCSGQFFDVISKQCTSTNQARTLKGCNRCQFTTGSMYWVNAVDPQCSEYFTCSNGLETKSTASTCGAGNFFNEDLQYCMIGNSTVGQYAQTHGACENYTCNPNTRLCNLVTATNTTSSHR.

Positions 1-20 (MKAKTLTATLALILLAFAQA) are cleaved as a signal peptide. 2 consecutive Chitin-binding type-2 domains span residues 25–83 (ASYC…NCFF) and 86–143 (ANPC…NTGN). 2 disulfide bridges follow: Cys60-Cys73 and Cys120-Cys133. Asn150 and Asn168 each carry an N-linked (GlcNAc...) asparagine glycan. 3 consecutive Chitin-binding type-2 domains span residues 151 to 208 (LSVC…ACSR), 224 to 283 (TSPC…RTLK), and 285 to 356 (CNRC…ACEN). The cysteines at positions 185 and 198 are disulfide-linked. N-linked (GlcNAc...) asparagine glycosylation is found at Asn247 and Asn252. Cys324 and Cys337 are joined by a disulfide. 3 N-linked (GlcNAc...) asparagine glycosylation sites follow: Asn341, Asn356, and Asn373.

Glycosylated. As to expression, larval peritrophic membrane.

In terms of biological role, binds chitin and may bind related oligosaccharide structures. This chain is Peritrophin-48, found in Chrysomya bezziana (Old world screw-worm fly).